We begin with the raw amino-acid sequence, 239 residues long: Large ribosomal subunit protein uL2 (239 aa).

Belongs to the universal ribosomal protein uL2 family.

The protein localises to the cytoplasm. This Encephalitozoon cuniculi (strain GB-M1) (Microsporidian parasite) protein is Large ribosomal subunit protein uL2 (RPL8).